We begin with the raw amino-acid sequence, 1393 residues long: DNA-directed RNA polymerase subunit beta' (1393 aa).

Zn(2+)-binding residues include Cys72, Cys74, Cys87, and Cys90. Mg(2+)-binding residues include Asp463, Asp465, and Asp467. Residues Cys812, Cys887, Cys894, and Cys897 each coordinate Zn(2+).

It belongs to the RNA polymerase beta' chain family. As to quaternary structure, the RNAP catalytic core consists of 2 alpha, 1 beta, 1 beta' and 1 omega subunit. When a sigma factor is associated with the core the holoenzyme is formed, which can initiate transcription. Mg(2+) serves as cofactor. Requires Zn(2+) as cofactor.

It carries out the reaction RNA(n) + a ribonucleoside 5'-triphosphate = RNA(n+1) + diphosphate. In terms of biological role, DNA-dependent RNA polymerase catalyzes the transcription of DNA into RNA using the four ribonucleoside triphosphates as substrates. This is DNA-directed RNA polymerase subunit beta' from Chlamydia abortus (strain DSM 27085 / S26/3) (Chlamydophila abortus).